A 199-amino-acid chain; its full sequence is Acireductone dioxygenase 3 (199 aa).

Fe(2+) contacts are provided by His99, His101, Glu105, and His144. Residues His99, His101, Glu105, and His144 each contribute to the Ni(2+) site.

It belongs to the acireductone dioxygenase (ARD) family. The cofactor is Fe(2+). Requires Ni(2+) as cofactor.

It is found in the cytoplasm. The protein resides in the nucleus. The catalysed reaction is 1,2-dihydroxy-5-(methylsulfanyl)pent-1-en-3-one + O2 = 4-methylsulfanyl-2-oxobutanoate + formate + 2 H(+). The enzyme catalyses 1,2-dihydroxy-5-(methylsulfanyl)pent-1-en-3-one + O2 = 3-(methylsulfanyl)propanoate + CO + formate + 2 H(+). Its pathway is amino-acid biosynthesis; L-methionine biosynthesis via salvage pathway; L-methionine from S-methyl-5-thio-alpha-D-ribose 1-phosphate: step 5/6. In terms of biological role, catalyzes 2 different reactions between oxygen and the acireductone 1,2-dihydroxy-3-keto-5-methylthiopentene (DHK-MTPene) depending upon the metal bound in the active site. Fe-containing acireductone dioxygenase (Fe-ARD) produces formate and 2-keto-4-methylthiobutyrate (KMTB), the alpha-ketoacid precursor of methionine in the methionine recycle pathway. Ni-containing acireductone dioxygenase (Ni-ARD) produces methylthiopropionate, carbon monoxide and formate, and does not lie on the methionine recycle pathway. This Arabidopsis thaliana (Mouse-ear cress) protein is Acireductone dioxygenase 3 (ARD3).